The chain runs to 275 residues: 3-methyl-2-oxobutanoate hydroxymethyltransferase (275 aa).

Mg(2+) contacts are provided by aspartate 55 and aspartate 94. Residues 55–56, aspartate 94, and lysine 122 each bind 3-methyl-2-oxobutanoate; that span reads DS. Glutamate 124 serves as a coordination point for Mg(2+). Glutamate 191 acts as the Proton acceptor in catalysis.

Belongs to the PanB family. As to quaternary structure, homodecamer; pentamer of dimers. Mg(2+) serves as cofactor.

Its subcellular location is the cytoplasm. It catalyses the reaction 3-methyl-2-oxobutanoate + (6R)-5,10-methylene-5,6,7,8-tetrahydrofolate + H2O = 2-dehydropantoate + (6S)-5,6,7,8-tetrahydrofolate. Its pathway is cofactor biosynthesis; (R)-pantothenate biosynthesis; (R)-pantoate from 3-methyl-2-oxobutanoate: step 1/2. In terms of biological role, catalyzes the reversible reaction in which hydroxymethyl group from 5,10-methylenetetrahydrofolate is transferred onto alpha-ketoisovalerate to form ketopantoate. This chain is 3-methyl-2-oxobutanoate hydroxymethyltransferase, found in Marinomonas sp. (strain MWYL1).